We begin with the raw amino-acid sequence, 353 residues long: MSKLETVYLYAGEEQPRVKLTCIKEGLTLTQVIKFVHSIQELYGIELQTSETITENLKIDCAPAYLKPNCIPHFYILEYEEISDTFFIWKSDGRWQLNKLSALLYVDNDANVVKNTSWKEVFQNDQRFKNYDKRAWLQNCLEKMNRDLSKLNVEQFWSQYDKICQSIAKQKKKQEQFNMEVFDNFKNIVSIAIIKTKVLSNKRLLTTTLKNYHNSMKKKYNIQEQNLKENSLASCSNNEPSASLESESRHFSPVNSLSPSSLSTDDEAVSTDYIYKGPESKPNVNFMHSSATNDLIKSNFESYFKLMAEDYETFDLRAWSRQRPRKFQLVEKKKITKNPPNSHHPHKNGKISF.

Over residues 233-245 (ASCSNNEPSASLE) the composition is skewed to polar residues. Positions 233 to 265 (ASCSNNEPSASLESESRHFSPVNSLSPSSLSTD) are disordered. The span at 252-263 (SPVNSLSPSSLS) shows a compositional bias: low complexity.

This is an uncharacterized protein from Saccharomyces cerevisiae (strain ATCC 204508 / S288c) (Baker's yeast).